The following is a 420-amino-acid chain: Riboflavin biosynthesis protein RibBA (420 aa).

The tract at residues 1-202 is DHBP synthase; the sequence is MTTFGTIEQA…IADLVAYRRR (202 aa). Residues 28–29, Asp33, 141–145, and Glu165 contribute to the D-ribulose 5-phosphate site; these read RE and RPGHT. Position 29 (Glu29) interacts with Mg(2+). His144 contacts Mg(2+). Positions 203–420 are GTP cyclohydrolase II; the sequence is TEKQVELVAE…RAVVGDGIGA (218 aa). 253–257 serves as a coordination point for GTP; the sequence is RVHSE. Cys258, Cys269, and Cys271 together coordinate Zn(2+). Residues Gln274, 297 to 299, and Thr319 contribute to the GTP site; that span reads EGR. Asp331 acts as the Proton acceptor; for GTP cyclohydrolase activity in catalysis. Arg333 functions as the Nucleophile; for GTP cyclohydrolase activity in the catalytic mechanism. Thr354 and Lys359 together coordinate GTP.

This sequence in the N-terminal section; belongs to the DHBP synthase family. The protein in the C-terminal section; belongs to the GTP cyclohydrolase II family. It depends on Mg(2+) as a cofactor. Requires Mn(2+) as cofactor. The cofactor is Zn(2+).

It catalyses the reaction D-ribulose 5-phosphate = (2S)-2-hydroxy-3-oxobutyl phosphate + formate + H(+). The catalysed reaction is GTP + 4 H2O = 2,5-diamino-6-hydroxy-4-(5-phosphoribosylamino)-pyrimidine + formate + 2 phosphate + 3 H(+). The protein operates within cofactor biosynthesis; riboflavin biosynthesis; 2-hydroxy-3-oxobutyl phosphate from D-ribulose 5-phosphate: step 1/1. It functions in the pathway cofactor biosynthesis; riboflavin biosynthesis; 5-amino-6-(D-ribitylamino)uracil from GTP: step 1/4. Catalyzes the conversion of D-ribulose 5-phosphate to formate and 3,4-dihydroxy-2-butanone 4-phosphate. In terms of biological role, catalyzes the conversion of GTP to 2,5-diamino-6-ribosylamino-4(3H)-pyrimidinone 5'-phosphate (DARP), formate and pyrophosphate. In Salinispora arenicola (strain CNS-205), this protein is Riboflavin biosynthesis protein RibBA.